Reading from the N-terminus, the 2476-residue chain is Zonadhesin (2476 aa).

An N-terminal signal peptide occupies residues 1–29 (MLGLPALAGPMAMPHPPLIPSTPTLLAFS). Over 30 to 2418 (FPGGFYMLLD…SPKKPEASNR (2389 aa)) the chain is Extracellular. 2 consecutive MAM domains span residues 31–144 (PGGF…PCEE) and 147–312 (PQCD…TCRG). N-linked (GlcNAc...) asparagine glycosylation is found at asparagine 109 and asparagine 269. Disordered regions lie at residues 313 to 332 (PSET…KPTV), 358 to 462 (PTVP…TERT), and 537 to 632 (ERTT…RTTI). The tract at residues 319–687 (STEKPVAPTE…ATTVTPRTTI (369 aa)) is 53 X approximate heptapeptide repeats (mucin-like domain). The span at 358-373 (PTVPTEKPTIPTEKST) shows a compositional bias: low complexity. A compositionally biased stretch (pro residues) spans 400–412 (TTPPEGPAVPPKG). Basic and acidic residues predominate over residues 423–433 (HTEKSTVHTEK). Residues 451-462 (PTKRTTTPTERT) show a composition bias toward low complexity. The TIL 1 domain maps to 690–739 (CPPNAHFERCACPVSCQSPTPNCELFCKPGCVCDPGFLFSGSHCVNASSC). Asparagine 735, asparagine 758, and asparagine 833 each carry an N-linked (GlcNAc...) asparagine glycan. The region spanning 740-794 (DCFYNDNYYKLGTDWFSPNCTEHCHCRPSSRMECQTFKCGTHTVCQLKNGQYGCH) is the VWFC 1 domain. The 178-residue stretch at 799–976 (ATCSVYGDPH…TSEDADQQCE (178 aa)) folds into the VWFD 1 domain. Intrachain disulfides connect cysteine 801–cysteine 936 and cysteine 823–cysteine 975. Positions 943–983 (SSNDNQKPDGSPAKDEKELGSSWQTSEDADQQCEENQVSPP) are disordered. The region spanning 1070–1123 (CPRNSRYTLCARLCPDTCHSEFSGRACKDRCVEGCECDPGFVLSGLQCVSRSEC) is the TIL 2 domain. The 57-residue stretch at 1124–1180 (GCLDSTAGYVKVGERWFKPGCRQLCICEGNNRTRCVLWRCQAQEFCGQQDGIYGCHA) folds into the VWFC 2 domain. Residue asparagine 1154 is glycosylated (N-linked (GlcNAc...) asparagine). One can recognise a VWFD 2 domain in the interval 1184 to 1364 (ATCTVSGDPH…INELSEPGCF (181 aa)). Cystine bridges form between cysteine 1186–cysteine 1324 and cysteine 1208–cysteine 1363. Asparagine 1329 and asparagine 1448 each carry an N-linked (GlcNAc...) asparagine glycan. A TIL 3 domain is found at 1456-1511 (CPSGSSYSTCANPCPATCLSLNNPSYCPSTLPCAEGCECQKGHILSGTSCVPLSQC). The VWFC 3 domain occupies 1512–1568 (GCTTQRGSYHPVGESWYTDNSCSRLCTCSAHNNISCRQASCKPSQMCWPQDGLIRCR). Residues asparagine 1544, asparagine 1596, and asparagine 1654 are each glycosylated (N-linked (GlcNAc...) asparagine). The 179-residue stretch at 1573–1751 (GVCRIPDTSH…RDKEIDPNCQ (179 aa)) folds into the VWFD 3 domain. Cystine bridges form between cysteine 1575/cysteine 1712 and cysteine 1597/cysteine 1750. Over residues 1747–1759 (DPNCQEDDRKTEA) the composition is skewed to basic and acidic residues. The segment at 1747 to 1768 (DPNCQEDDRKTEAESQEQPSAN) is disordered. Residue asparagine 1843 is glycosylated (N-linked (GlcNAc...) asparagine). The TIL 4 domain maps to 1851–1907 (CSAHSVYTSCVPSCLPSCQDPEGQCTGAGAPSTCEEGCICEPGYVLSEQQCVARSQC). The VWFC 4 domain maps to 1908–1963 (GCRDARGTFLPVGRFRLSSGCSQMCVCTAGAIECRPFTCPSGSQCEPNEDGKDFCQ). Asparagine 1965 carries an N-linked (GlcNAc...) asparagine glycan. Positions 1968–2145 (NLCSVFGDPH…WEVKAKEGHP (178 aa)) constitute a VWFD 4 domain. A disulfide bond links cysteine 1970 and cysteine 2107. 3 N-linked (GlcNAc...) asparagine glycosylation sites follow: asparagine 2122, asparagine 2165, and asparagine 2178. Positions 2257–2310 (CPANTVYQSCMTPCPASCATLAVPRACDGPCVEGCASLPGYIYSGAQSLPMAHC) constitute a TIL 5 domain. The VWFC 5 domain maps to 2311–2365 (GCTNNGVYYQQGDSFVTENCSQRCTCASSGVLLCEPLSCRPGEICTLGNLTRGCF). Residues asparagine 2329 and asparagine 2359 are each glycosylated (N-linked (GlcNAc...) asparagine). In terms of domain architecture, EGF-like spans 2366–2402 (RDSPCLQNPCQNDGRCREQGTHFTCECELGYGGDLCT). Disulfide bonds link cysteine 2370–cysteine 2381, cysteine 2375–cysteine 2390, and cysteine 2392–cysteine 2401. The chain crosses the membrane as a helical span at residues 2419–2439 (VAILLGMLMPTVLLVPAVTRV). A disordered region spans residues 2438–2476 (RVSRKRRRRRRPSRERTQSQNRGKRAGTDCAPEQAYKVA). The span at 2439 to 2450 (VSRKRRRRRRPS) shows a compositional bias: basic residues. The Cytoplasmic portion of the chain corresponds to 2440-2476 (SRKRRRRRRPSRERTQSQNRGKRAGTDCAPEQAYKVA).

Probably forms covalent oligomers. The MAM domains and the mucin-like domains are missing from the zonadhesin that binds to the egg extracellular matrix. Processing might occur during sperm maturation and/or capacitation. In testis, primarily in haploid spermatids. Not in lung, liver, heart, spleen, brain, kidney, epididymis.

It is found in the cell membrane. Binds in a species-specific manner to the zona pellucida of the egg. May be involved in gamete recognition and/or signaling. The chain is Zonadhesin (ZAN) from Sus scrofa (Pig).